A 554-amino-acid chain; its full sequence is Endochitinase (554 aa).

An N-terminal signal peptide occupies residues 1 to 19 (MRATLATLAVLALATAVQS). A GH18 domain is found at 23–398 (ARIVCYFSNW…KILHKHMSSY (376 aa)). An intrachain disulfide couples Cys-27 to Cys-52. 76 to 77 (LD) lines the chitin pocket. Residue Asn-85 is glycosylated (N-linked (GlcNAc...) asparagine). 103-106 (GGWA) contacts chitin. Glu-146 serves as the catalytic Proton donor. Residues Tyr-147 and 213–216 (MSYD) each bind chitin. A glycan (N-linked (GlcNAc...) asparagine) is linked at Asn-303. Trp-370 is a chitin binding site. The tract at residues 398–494 (YTVPPPHTEN…VPPTENEVDG (97 aa)) is disordered. Positions 431–457 (PTTTTAKPASTTKTTVKTTTTTTAKPP) are enriched in low complexity. A compositionally biased stretch (basic and acidic residues) spans 467 to 477 (INVRPEPKPEP). One can recognise a Chitin-binding type-2 domain in the interval 495–553 (SEICNSDQDYIPDKKHCDKYWRCVNGEAMQFSCQHGTVFNVELNVCDWPSNATRRECQQ). Residues Cys-527 and Cys-540 are joined by a disulfide bond. The N-linked (GlcNAc...) asparagine glycan is linked to Asn-545.

This sequence belongs to the glycosyl hydrolase 18 family. Chitinase class II subfamily. Epidermis and gut.

The protein localises to the secreted. The catalysed reaction is Random endo-hydrolysis of N-acetyl-beta-D-glucosaminide (1-&gt;4)-beta-linkages in chitin and chitodextrins.. Functionally, digests chitin in the exoskeleton during the molting process. The polypeptide is Endochitinase (Manduca sexta (Tobacco hawkmoth)).